The chain runs to 128 residues: Glycine cleavage system H protein (128 aa).

The Lipoyl-binding domain occupies 25-107 (TITVGITHHA…YGAGWFFKIK (83 aa)). K66 carries the post-translational modification N6-lipoyllysine.

Belongs to the GcvH family. As to quaternary structure, the glycine cleavage system is composed of four proteins: P, T, L and H. (R)-lipoate serves as cofactor.

The glycine cleavage system catalyzes the degradation of glycine. The H protein shuttles the methylamine group of glycine from the P protein to the T protein. The protein is Glycine cleavage system H protein of Neisseria meningitidis serogroup C (strain 053442).